Consider the following 398-residue polypeptide: MRASYMFTSESVSEGHPDKVCDRISDEVVDLFFREGPKAGISPWAIRAACETLATTNKVVIAGETRGPASVTNDQIESVVRAAIKDIGYEQEGFHWETCDIEILLHPQSADIAQGVDALQPGTNQEEGAGDQGIMFGYATNETPDLMPAPIFYAHKILRLISEARHSGKEKVLGPDSKSQVTIQYENGKPVGVREIVVSHQHLVEDMTSAHVRERVEPYVRQALPADWITDKTIWHINPTGKFYIGGPDGDTGLTGRKIIVDTYGGAAPHGGGAFSGKDPTKVDRSAAYASRYLAKNIVAAGLADRCTLQLAYAIGVARPLSIYIDTHGTGKVSEDKLEKAVAEAMDLTPRGIRTHLDLNKPIYARTSSYGHFGRTPDADGGFSWEKTDLADALKRAV.

Residue histidine 16 coordinates ATP. Aspartate 18 serves as a coordination point for Mg(2+). A K(+)-binding site is contributed by glutamate 51. Positions 64 and 108 each coordinate L-methionine. The flexible loop stretch occupies residues 108–118 (QSADIAQGVDA). Residues 176 to 178 (DSK), 242 to 243 (KF), aspartate 251, 257 to 258 (RK), alanine 274, and lysine 278 each bind ATP. Aspartate 251 is an L-methionine binding site. Lysine 282 contacts L-methionine.

Belongs to the AdoMet synthase family. Homotetramer; dimer of dimers. Mg(2+) serves as cofactor. The cofactor is K(+).

The protein localises to the cytoplasm. It catalyses the reaction L-methionine + ATP + H2O = S-adenosyl-L-methionine + phosphate + diphosphate. It participates in amino-acid biosynthesis; S-adenosyl-L-methionine biosynthesis; S-adenosyl-L-methionine from L-methionine: step 1/1. Its function is as follows. Catalyzes the formation of S-adenosylmethionine (AdoMet) from methionine and ATP. The overall synthetic reaction is composed of two sequential steps, AdoMet formation and the subsequent tripolyphosphate hydrolysis which occurs prior to release of AdoMet from the enzyme. In Rhodopseudomonas palustris (strain BisB5), this protein is S-adenosylmethionine synthase.